Reading from the N-terminus, the 469-residue chain is UDP-N-acetylmuramate--L-alanine ligase (469 aa).

An ATP-binding site is contributed by 122-128; the sequence is GTHGKTT.

The protein belongs to the MurCDEF family.

Its subcellular location is the cytoplasm. The catalysed reaction is UDP-N-acetyl-alpha-D-muramate + L-alanine + ATP = UDP-N-acetyl-alpha-D-muramoyl-L-alanine + ADP + phosphate + H(+). It participates in cell wall biogenesis; peptidoglycan biosynthesis. Its function is as follows. Cell wall formation. The polypeptide is UDP-N-acetylmuramate--L-alanine ligase (Legionella pneumophila (strain Paris)).